The sequence spans 407 residues: Arginine deiminase (407 aa).

The Amidino-cysteine intermediate role is filled by cysteine 397.

This sequence belongs to the arginine deiminase family.

It localises to the cytoplasm. It catalyses the reaction L-arginine + H2O = L-citrulline + NH4(+). The protein operates within amino-acid degradation; L-arginine degradation via ADI pathway; carbamoyl phosphate from L-arginine: step 1/2. The polypeptide is Arginine deiminase (Salmonella arizonae (strain ATCC BAA-731 / CDC346-86 / RSK2980)).